A 194-amino-acid chain; its full sequence is Myelin-associated neurite-outgrowth inhibitor (194 aa).

M1 bears the N-acetylmethionine mark. The Cytoplasmic portion of the chain corresponds to 1 to 18 (MNPVYSPGSSGVPYANAK). S6 carries the post-translational modification Phosphoserine. A helical membrane pass occupies residues 19-41 (GIGYPAGFPVGYAAAPAYSPNMY). Residues 42 to 141 (PGANPTFQTG…PAPIPPPRGS (100 aa)) lie on the Extracellular side of the membrane. An N-linked (GlcNAc...) asparagine glycan is attached at N45. A helical transmembrane segment spans residues 142 to 163 (GVTMGMVAGTTMAMSAGTLLTA). The Cytoplasmic segment spans residues 164–194 (HSPTPVAPHPVTVPTYRAPGTPTYSYVPPQW).

It belongs to the FAM168 family. In terms of assembly, may form homodimers. May interact with DAZAP2, FAM168A, PRDX6, RBM6, TMTC1 and YPEL2. Interacts with CDC27. N-glycosylated. Predominantly expressed in the brain, including olfactory bulb, cortex and cerebellum (at protein level).

Its subcellular location is the cytoplasm. The protein resides in the perinuclear region. It localises to the cell membrane. The protein localises to the cell projection. It is found in the axon. Functionally, inhibitor of neuronal axonal outgrowth. Acts as a negative regulator of CDC42 and STAT3 and a positive regulator of STMN2. Positive regulator of CDC27. The sequence is that of Myelin-associated neurite-outgrowth inhibitor (Fam168b) from Mus musculus (Mouse).